An 83-amino-acid chain; its full sequence is uncharacterized protein (83 aa).

An N-terminal signal peptide occupies residues 1-20 (MRRALTLAVLATCAVLPALA).

The protein to P.denitrificans and M.extorquens MoxJ.

This is an uncharacterized protein from Paracoccus denitrificans.